We begin with the raw amino-acid sequence, 462 residues long: L-seryl-tRNA(Sec) selenium transferase (462 aa).

The residue at position 293 (Lys293) is an N6-(pyridoxal phosphate)lysine.

It belongs to the SelA family. Pyridoxal 5'-phosphate is required as a cofactor.

The protein localises to the cytoplasm. It carries out the reaction L-seryl-tRNA(Sec) + selenophosphate + H(+) = L-selenocysteinyl-tRNA(Sec) + phosphate. It participates in aminoacyl-tRNA biosynthesis; selenocysteinyl-tRNA(Sec) biosynthesis; selenocysteinyl-tRNA(Sec) from L-seryl-tRNA(Sec) (bacterial route): step 1/1. Functionally, converts seryl-tRNA(Sec) to selenocysteinyl-tRNA(Sec) required for selenoprotein biosynthesis. The sequence is that of L-seryl-tRNA(Sec) selenium transferase from Clostridium botulinum (strain Langeland / NCTC 10281 / Type F).